Here is a 282-residue protein sequence, read N- to C-terminus: Armadillo repeat-containing protein 1 (282 aa).

Met1 carries the N-acetylmethionine modification. Residues 39–81 (GCLPGLILSMDHPNPPVVHSALLALRYLAECRANREKMKGELG) form an ARM repeat. At Thr137 the chain carries Phosphothreonine. 4 positions are modified to phosphoserine: Ser189, Ser246, Ser260, and Ser267. A disordered region spans residues 239–261 (DYLPEDESPTKEQDKAVSRVGSH). Residues 246–255 (SPTKEQDKAV) show a composition bias toward basic and acidic residues.

Interacts with mitochondrial contact site and cristae organizing system (MICOS) complex components IMMT/MIC60 and MICOS10/MIC10. Interacts with mitochondrial outer membrane sorting assembly machinery (SAM) complex components SAMM50 and MTX1.

It localises to the cytoplasm. The protein localises to the mitochondrion. The protein resides in the mitochondrion outer membrane. Its function is as follows. In association with mitochondrial contact site and cristae organizing system (MICOS) complex components and mitochondrial outer membrane sorting assembly machinery (SAM) complex components may regulate mitochondrial dynamics playing a role in determining mitochondrial length, distribution and motility. The sequence is that of Armadillo repeat-containing protein 1 (ARMC1) from Pongo abelii (Sumatran orangutan).